A 490-amino-acid chain; its full sequence is UDP-glycosyltransferase 73C7 (490 aa).

Residues Ser291, 351 to 353 (APQ), 368 to 376 (HCGWNSTLE), and 390 to 393 (FAEQ) each bind UDP-alpha-D-glucose.

Belongs to the UDP-glycosyltransferase family.

This chain is UDP-glycosyltransferase 73C7 (UGT73C7), found in Arabidopsis thaliana (Mouse-ear cress).